We begin with the raw amino-acid sequence, 323 residues long: Phospho-N-acetylmuramoyl-pentapeptide-transferase (323 aa).

9 consecutive transmembrane segments (helical) span residues 5–25 (SAVL…PSLI), 57–77 (LLFI…QGLI), 81–101 (LWAL…DDSI), 118–138 (LCQV…GFQM), 140–160 (FGTT…IVGF), 173–193 (LVSG…LVNL), 196–216 (PGYP…LGFF), 225–247 (IFMG…LLLH), and 302–322 (IVFW…ILLV).

Belongs to the glycosyltransferase 4 family. MraY subfamily. The cofactor is Mg(2+).

Its subcellular location is the cell membrane. The enzyme catalyses UDP-N-acetyl-alpha-D-muramoyl-L-alanyl-gamma-D-glutamyl-L-lysyl-D-alanyl-D-alanine + di-trans,octa-cis-undecaprenyl phosphate = Mur2Ac(oyl-L-Ala-gamma-D-Glu-L-Lys-D-Ala-D-Ala)-di-trans,octa-cis-undecaprenyl diphosphate + UMP. The protein operates within cell wall biogenesis; peptidoglycan biosynthesis. Catalyzes the initial step of the lipid cycle reactions in the biosynthesis of the cell wall peptidoglycan: transfers peptidoglycan precursor phospho-MurNAc-pentapeptide from UDP-MurNAc-pentapeptide onto the lipid carrier undecaprenyl phosphate, yielding undecaprenyl-pyrophosphoryl-MurNAc-pentapeptide, known as lipid I. The sequence is that of Phospho-N-acetylmuramoyl-pentapeptide-transferase from Limosilactobacillus reuteri (strain DSM 20016) (Lactobacillus reuteri).